A 284-amino-acid chain; its full sequence is Ubiquitin thioesterase otubain-like (284 aa).

Residues 77–274 enclose the OTU domain; that stretch reads GEIRYIRGDG…PGHYDVIYKK (198 aa). Residue D85 is part of the active site. C88 (nucleophile) is an active-site residue. I176 is a binding site for substrate. Active-site residues include H245 and H267.

This sequence belongs to the peptidase C65 family.

The enzyme catalyses Thiol-dependent hydrolysis of ester, thioester, amide, peptide and isopeptide bonds formed by the C-terminal Gly of ubiquitin (a 76-residue protein attached to proteins as an intracellular targeting signal).. Hydrolase that can remove conjugated ubiquitin from proteins and plays an important regulatory role at the level of protein turnover by preventing degradation. Specifically cleaves 'Lys-48'-linked polyubiquitin. The chain is Ubiquitin thioesterase otubain-like (otub-1) from Caenorhabditis elegans.